The chain runs to 137 residues: Regulator of cell cycle RGCC (137 aa).

Disordered regions lie at residues 1 to 20 (MKPP…APAL) and 57 to 80 (LERM…SESA). Low complexity predominate over residues 65 to 80 (SASVSDSSGFSDSESA). Phosphoserine occurs at positions 67, 69, 71, 75, 91, and 97. Thr-111 is subject to Phosphothreonine; by CDK1.

Interacts with SMAD3. Interacts with CDK1 and PLK1. Detected in brain, heart and liver (at protein level). Highly expressed in liver, skeletal muscle, kidney and pancreas. Detected at lower levels in heart, brain and placenta. Detected in aorta endothelial cells. Overexpressed in colon, breast, prostate, bladder, lung, and ovarian cancer tissues.

It localises to the cytoplasm. Its subcellular location is the nucleus. The protein resides in the cytoskeleton. The protein localises to the microtubule organizing center. It is found in the centrosome. Its function is as follows. Modulates the activity of cell cycle-specific kinases. Enhances CDK1 activity. May contribute to the regulation of the cell cycle. May inhibit growth of glioma cells by promoting arrest of mitotic progression at the G2/M transition. Fibrogenic factor contributing to the pathogenesis of renal fibrosis through fibroblast activation. This Homo sapiens (Human) protein is Regulator of cell cycle RGCC (RGCC).